The sequence spans 156 residues: UPF0266 membrane protein NT01EI_1718 (156 aa).

The next 3 membrane-spanning stretches (helical) occupy residues 6-26 (IALL…EAIM), 46-63 (DSLI…RNIS), and 67-87 (APFT…IFYL).

The protein belongs to the UPF0266 family.

The protein resides in the cell inner membrane. This Edwardsiella ictaluri (strain 93-146) protein is UPF0266 membrane protein NT01EI_1718.